Consider the following 713-residue polypeptide: MLSALPLLFLLLGGALARPDRITFPRSACEAPPAVLSEVQGTLQRPLGRDSRSSPANCTWVILGSKDQTVTVRFQKLHLACGSEHLILHSPLQPPISLCEAPSGPLQLPGGNVTITYSYAGARAPMGQGFLLTYSQDWLLCLQEEFQCLNHRCIPAAQRCDGIDACGDGSDEAGCSSDPFPNLNPAPAPTLACNLTLEDFYGVFSSPGYSHLASVSHPQSCLWLLDPHDGRRLAVRFTALDLSYGDAVHVYDGAGPPETPRLLRSLTHFSNGKAVTVETLSGQAVVSYHTVAWSSGRGFNATYHVRGYCLPWDRPCGLGSGLGASENLGERCYSEAQRCDGSWDCADGTDEEGCPGCPPGHFPCGAAGTPGATACYLPADRCNYQTFCADGADERRCRHCQPGNFRCRDEKCVYETWVCDGQPDCTDGSDEWDCSYALPRKVITAAVIGSLVCGLLLVIALGCTCKLYAIRTQEYSIFAPLSRMEAEIVQQQAPPSYGQLIAQGAIPPVEDFPTENPNDNSVLGNLRSLLQILRQDMTPGGTSGGRRRQRGRSIRRLVRRLRRWGLLPRTNTPARAPETRSQVTPSVPSEALDDSTGQACEGGAVGGQDGEQAPPLPIKTPIPTPSTLPALATVSEPPGPLPSVPVESSLLSGVVQVLRGRLLPSLWSPGPTWTQTGTHTTVLSPEDEDDVLLLPLAEPEVWVVEAEDEPLLA.

The first 17 residues, 1-17 (MLSALPLLFLLLGGALA), serve as a signal peptide directing secretion. The Extracellular segment spans residues 18-441 (RPDRITFPRS…WDCSYALPRK (424 aa)). Cystine bridges form between Cys-29–Cys-58 and Cys-81–Cys-99. The CUB 1 domain occupies 29 to 137 (CEAPPAVLSE…QGFLLTYSQD (109 aa)). N-linked (GlcNAc...) asparagine glycosylation occurs at Asn-57. An N-linked (GlcNAc...) asparagine glycan is attached at Asn-112. Positions 140 to 176 (LCLQEEFQCLNHRCIPAAQRCDGIDACGDGSDEAGCS) constitute an LDL-receptor class A 1 domain. Intrachain disulfides connect Cys-141–Cys-153, Cys-148–Cys-166, Cys-160–Cys-175, and Cys-193–Cys-221. Residues 193–306 (CNLTLEDFYG…RGFNATYHVR (114 aa)) enclose the CUB 2 domain. N-linked (GlcNAc...) asparagine glycosylation is found at Asn-194 and Asn-300. 3 consecutive LDL-receptor class A domains span residues 308–355 (YCLP…EGCP), 356–398 (GCPP…RRCR), and 399–435 (HCQPGNFRCRDEKCVYETWVCDGQPDCTDGSDEWDCS). Cystine bridges form between Cys-309–Cys-332, Cys-316–Cys-345, Cys-339–Cys-354, Cys-357–Cys-375, Cys-364–Cys-388, Cys-382–Cys-397, Cys-400–Cys-412, Cys-407–Cys-425, and Cys-419–Cys-434. Residues 442 to 462 (VITAAVIGSLVCGLLLVIALG) form a helical membrane-spanning segment. Residues 463-713 (CTCKLYAIRT…VEAEDEPLLA (251 aa)) lie on the Cytoplasmic side of the membrane. Positions 566–636 (LLPRTNTPAR…TLPALATVSE (71 aa)) are disordered. Residue Thr-596 is modified to Phosphothreonine. Over residues 614–626 (PPLPIKTPIPTPS) the composition is skewed to pro residues.

Belongs to the LDLR family. As to expression, highly expressed in heart, lung, liver and liver. Expressed at low level in brain and spleen. Weakly or not expressed in testis and skeletal muscle. In liver, it is expressed in hepatocytes and at higher level in sinusoidal lining. In the kidney, it is expressed in peritubular capillaries. In brain, it is expressed in the epithelium of the choroid plexus ependymal cells of the third ventricle pia matter, and to lesser extent in hippocampal fields CA2 and CA3.

The protein localises to the membrane. It is found in the coated pit. Functionally, probable receptor, which is involved in the internalization of lipophilic molecules and/or signal transduction. May be involved in the uptake of lipoprotein APOE in liver. The protein is Low-density lipoprotein receptor-related protein 10 (Lrp10) of Mus musculus (Mouse).